The primary structure comprises 123 residues: Holo-[acyl-carrier-protein] synthase (123 aa).

2 residues coordinate Mg(2+): Asp8 and Glu55.

Belongs to the P-Pant transferase superfamily. AcpS family. Mg(2+) is required as a cofactor.

The protein localises to the cytoplasm. The enzyme catalyses apo-[ACP] + CoA = holo-[ACP] + adenosine 3',5'-bisphosphate + H(+). Transfers the 4'-phosphopantetheine moiety from coenzyme A to a Ser of acyl-carrier-protein. The sequence is that of Holo-[acyl-carrier-protein] synthase from Caldicellulosiruptor saccharolyticus (strain ATCC 43494 / DSM 8903 / Tp8T 6331).